Consider the following 245-residue polypeptide: MNRTRPLPEIKMVSANKTASILEERTGHRFLNLKRLERALTHSSVQAPARANYERLEFLGDRVLGLTVAEMLFEAFPEASEGELSVRLNALVNAETCAAIADEIGLADLIHTGSDIKSLNDKRLLNVRADVVEALIATIYLDGGLEAARSFIQRYWKKRSLETGAARRDAKTELQEWAHQQGNVHPVYAILSRSGPDHDPLFLVEVTVKGFAPEKGEGRSKRIAEQSAAEAMLYREGVWKRDGSA.

The region spanning 19-144 is the RNase III domain; that stretch reads ASILEERTGH…LIATIYLDGG (126 aa). Residue E57 participates in Mg(2+) binding. D61 is a catalytic residue. Positions 130 and 133 each coordinate Mg(2+). E133 is an active-site residue. In terms of domain architecture, DRBM spans 169 to 238; the sequence is DAKTELQEWA…AEAMLYREGV (70 aa).

This sequence belongs to the ribonuclease III family. As to quaternary structure, homodimer. Mg(2+) is required as a cofactor.

It is found in the cytoplasm. It carries out the reaction Endonucleolytic cleavage to 5'-phosphomonoester.. Functionally, digests double-stranded RNA. Involved in the processing of primary rRNA transcript to yield the immediate precursors to the large and small rRNAs (23S and 16S). Processes some mRNAs, and tRNAs when they are encoded in the rRNA operon. Processes pre-crRNA and tracrRNA of type II CRISPR loci if present in the organism. The protein is Ribonuclease 3 of Brucella abortus (strain S19).